We begin with the raw amino-acid sequence, 218 residues long: Ribose-5-phosphate isomerase A (218 aa).

Residues 28-31 (TGST), 81-84 (DGAD), and 94-97 (KGGG) contribute to the substrate site. Glutamate 103 serves as the catalytic Proton acceptor. Lysine 121 is a substrate binding site.

Belongs to the ribose 5-phosphate isomerase family. In terms of assembly, homodimer.

The catalysed reaction is aldehydo-D-ribose 5-phosphate = D-ribulose 5-phosphate. Its pathway is carbohydrate degradation; pentose phosphate pathway; D-ribose 5-phosphate from D-ribulose 5-phosphate (non-oxidative stage): step 1/1. Its function is as follows. Catalyzes the reversible conversion of ribose-5-phosphate to ribulose 5-phosphate. The sequence is that of Ribose-5-phosphate isomerase A from Aliivibrio fischeri (strain ATCC 700601 / ES114) (Vibrio fischeri).